Consider the following 209-residue polypeptide: Uracil phosphoribosyltransferase (209 aa).

5-phospho-alpha-D-ribose 1-diphosphate is bound by residues arginine 79, arginine 104, and 131 to 139 (DPMLATGGS). Residues isoleucine 194 and 199 to 201 (GDA) each bind uracil. Aspartate 200 contacts 5-phospho-alpha-D-ribose 1-diphosphate.

Belongs to the UPRTase family. Mg(2+) serves as cofactor.

The catalysed reaction is UMP + diphosphate = 5-phospho-alpha-D-ribose 1-diphosphate + uracil. The protein operates within pyrimidine metabolism; UMP biosynthesis via salvage pathway; UMP from uracil: step 1/1. With respect to regulation, allosterically activated by GTP. In terms of biological role, catalyzes the conversion of uracil and 5-phospho-alpha-D-ribose 1-diphosphate (PRPP) to UMP and diphosphate. The protein is Uracil phosphoribosyltransferase of Clostridium acetobutylicum (strain ATCC 824 / DSM 792 / JCM 1419 / IAM 19013 / LMG 5710 / NBRC 13948 / NRRL B-527 / VKM B-1787 / 2291 / W).